The sequence spans 198 residues: Small ribosomal subunit protein uS4 (198 aa).

Residues 88–153 (LRLDNVMFRM…AQRYKDILEV (66 aa)) form the S4 RNA-binding domain.

This sequence belongs to the universal ribosomal protein uS4 family. As to quaternary structure, part of the 30S ribosomal subunit. Contacts protein S5. The interaction surface between S4 and S5 is involved in control of translational fidelity.

Functionally, one of the primary rRNA binding proteins, it binds directly to 16S rRNA where it nucleates assembly of the body of the 30S subunit. In terms of biological role, with S5 and S12 plays an important role in translational accuracy. The sequence is that of Small ribosomal subunit protein uS4 from Lachnoclostridium phytofermentans (strain ATCC 700394 / DSM 18823 / ISDg) (Clostridium phytofermentans).